Consider the following 122-residue polypeptide: uncharacterized protein (122 aa).

The protein localises to the mitochondrion. This is an uncharacterized protein from Arabidopsis thaliana (Mouse-ear cress).